The chain runs to 649 residues: UvrABC system protein B (649 aa).

The region spanning 25–178 (EHYKDGIKEQ…EDILKELVKM (154 aa)) is the Helicase ATP-binding domain. 38 to 45 (GVTGSGKT) contacts ATP. The Beta-hairpin signature appears at 91-114 (YYDYYQPEAYVAQTDTFIDKESAI). The Helicase C-terminal domain maps to 428 to 594 (QVDDLLGEIR…SVVRKLKDKK (167 aa)). Residues 614-649 (DEIIKELEKEMKQAAKDLNFEKAAKLRDRIMELKEE) form the UVR domain.

It belongs to the UvrB family. Forms a heterotetramer with UvrA during the search for lesions. Interacts with UvrC in an incision complex.

The protein localises to the cytoplasm. Functionally, the UvrABC repair system catalyzes the recognition and processing of DNA lesions. A damage recognition complex composed of 2 UvrA and 2 UvrB subunits scans DNA for abnormalities. Upon binding of the UvrA(2)B(2) complex to a putative damaged site, the DNA wraps around one UvrB monomer. DNA wrap is dependent on ATP binding by UvrB and probably causes local melting of the DNA helix, facilitating insertion of UvrB beta-hairpin between the DNA strands. Then UvrB probes one DNA strand for the presence of a lesion. If a lesion is found the UvrA subunits dissociate and the UvrB-DNA preincision complex is formed. This complex is subsequently bound by UvrC and the second UvrB is released. If no lesion is found, the DNA wraps around the other UvrB subunit that will check the other stand for damage. In Methanosphaera stadtmanae (strain ATCC 43021 / DSM 3091 / JCM 11832 / MCB-3), this protein is UvrABC system protein B.